Here is a 394-residue protein sequence, read N- to C-terminus: Acid ceramidase (394 aa).

A signal peptide spans 1-20; the sequence is MLGRSLLTWVLAAAVTCAQA. Cys30 and Cys339 are oxidised to a cystine. Catalysis depends on Cys142, which acts as the Nucleophile. Asn194, Asn258, Asn285, and Asn341 each carry an N-linked (GlcNAc...) asparagine glycan. Cys387 and Cys391 are joined by a disulfide.

The protein belongs to the acid ceramidase family. As to quaternary structure, heterodimer; disulfide-linked. The heterodimer is composed of the disulfide-linked alpha and beta chains produced by autocatalytic cleavage of the precursor. In terms of processing, N-glycosylated. Proteolytically cleaved into two chains alpha and beta that remain associated via a disulfide bond. Cleavage gives rise to a conformation change that activates the enzyme. The same catalytic Cys residue mediates the autoproteolytic cleavage and subsequent hydrolysis of lipid substrates. The beta chain may undergo an additional C-terminal processing.

Its subcellular location is the lysosome. The protein resides in the secreted. It catalyses the reaction an N-acylsphing-4-enine + H2O = sphing-4-enine + a fatty acid. The enzyme catalyses N-dodecanoylsphing-4-enine + H2O = dodecanoate + sphing-4-enine. It carries out the reaction N-tetradecanoylsphing-4-enine + H2O = tetradecanoate + sphing-4-enine. The catalysed reaction is N-hexadecanoylsphing-4-enine + H2O = sphing-4-enine + hexadecanoate. It catalyses the reaction N-octadecanoylsphing-4-enine + H2O = sphing-4-enine + octadecanoate. The enzyme catalyses N-dodecanoyl-(4R)-hydroxysphinganine + H2O = (4R)-hydroxysphinganine + dodecanoate. It carries out the reaction N-(dodecanoyl)-sphinganine + H2O = dodecanoate + sphinganine. The catalysed reaction is N-(acetyl)-sphing-4-enine + H2O = sphing-4-enine + acetate. It catalyses the reaction N-(hexanoyl)sphing-4-enine + H2O = hexanoate + sphing-4-enine. The enzyme catalyses N-octanoylsphing-4-enine + H2O = octanoate + sphing-4-enine. It carries out the reaction N-(9Z-octadecenoyl)-sphing-4-enine + H2O = sphing-4-enine + (9Z)-octadecenoate. The catalysed reaction is N-dodecanoylethanolamine + H2O = dodecanoate + ethanolamine. It functions in the pathway lipid metabolism; sphingolipid metabolism. Its function is as follows. Lysosomal ceramidase that hydrolyzes sphingolipid ceramides into sphingosine and free fatty acids at acidic pH. Ceramides, sphingosine, and its phosphorylated form sphingosine-1-phosphate are bioactive lipids that mediate cellular signaling pathways regulating several biological processes including cell proliferation, apoptosis and differentiation. Has a higher catalytic efficiency towards C12-ceramides versus other ceramides. Also catalyzes the reverse reaction allowing the synthesis of ceramides from fatty acids and sphingosine. For the reverse synthetic reaction, the natural sphingosine D-erythro isomer is more efficiently utilized as a substrate compared to D-erythro-dihydrosphingosine and D-erythro-phytosphingosine, while the fatty acids with chain lengths of 12 or 14 carbons are the most efficiently used. Also has an N-acylethanolamine hydrolase activity. By regulating the levels of ceramides, sphingosine and sphingosine-1-phosphate in the epidermis, mediates the calcium-induced differentiation of epidermal keratinocytes. Also indirectly regulates tumor necrosis factor/TNF-induced apoptosis. By regulating the intracellular balance between ceramides and sphingosine, in adrenocortical cells, probably also acts as a regulator of steroidogenesis. The sequence is that of Acid ceramidase from Rattus norvegicus (Rat).